The following is a 238-amino-acid chain: Lipid transferase CIDEC (238 aa).

A required for liquid-liquid phase separation (LLPS) region spans residues 1–35; it reads MEYAMKSLSLLYPKSLSRHVSVRTSVVTQQLLSEP. In terms of domain architecture, CIDE-N spans 41–118; that stretch reads RARPCRVSTA…VLQKGQKWQP (78 aa).

The protein belongs to the CIDE family. As to quaternary structure, homodimer. Homooligomer; undergoes liquid-liquid phase separation (LLPS) via its N-terminus, facilitating lipid droplet fusion, occurs at the lipid droplet contact sites. Interacts with CIDEA. Interacts with PLIN1. Interacts with NFAT5; this interaction is direct and retains NFAT5 in the cytoplasm. Interacts with CEBPB. Interacts with isoform CLSTN3beta of CLSTN3; inhibiting the lipid transferase activity of CIDEC. In terms of processing, ubiquitinated and targeted to proteasomal degradation, resulting in a short half-life (about 15 minutes in 3T3-L1 cells). Protein stability depends on triaclyglycerol synthesis, fatty acid availability and lipid droplet formation. As to expression, expressed mainly in adipose tissue, small intestine, heart, colon and stomach and, at lower levels, in brain, kidney and liver.

It localises to the lipid droplet. It is found in the endoplasmic reticulum. Its subcellular location is the nucleus. It carries out the reaction a triacyl-sn-glycerol(in) = a triacyl-sn-glycerol(out). In terms of biological role, lipid transferase specifically expressed in white adipose tissue, which promotes unilocular lipid droplet formation by mediating lipid droplet fusion. Lipid droplet fusion promotes their enlargement, restricting lipolysis and favoring lipid storage. Localizes on the lipid droplet surface, at focal contact sites between lipid droplets, and mediates atypical lipid droplet fusion by undergoing liquid-liquid phase separation (LLPS) and promoting directional net neutral lipid transfer from the smaller to larger lipid droplets. The transfer direction may be driven by the internal pressure difference between the contacting lipid droplet pair. Its role in neutral lipid transfer and lipid droplet enlargement is activated by the interaction with PLIN1. May also act as a CEBPB coactivator in the white adipose tissue to control the expression of a subset of CEBPB downstream target genes, including SOCS1, SOCS3, TGFB1, TGFBR1, ID2 and XDH. When overexpressed in preadipocytes, induces apoptosis or increases cell susceptibility to apoptosis induced by serum deprivation or TGFB treatment. The chain is Lipid transferase CIDEC from Homo sapiens (Human).